Here is a 267-residue protein sequence, read N- to C-terminus: Integral membrane protein 2C (267 aa).

Position 37 is a phosphothreonine (Thr37). The helical; Signal-anchor for type II membrane protein transmembrane segment at 55–75 threads the bilayer; sequence VGGVCYLSMGMVVLLMGLVFA. A BRICHOS domain is found at 136-230; it reads FGGGDPADII…LCNGKDTYRL (95 aa). Cys163 and Cys222 are oxidised to a cystine. An N-linked (GlcNAc...) asparagine glycan is attached at Asn169.

It belongs to the ITM2 family. In terms of assembly, interacts with BACE1. Interacts with APP. Interacts with STMN2. Type I membrane-bound, as well as soluble, furin has a pre-eminent role in ITM2C proteolytic processing. PCSK7 and PCSK5 may also be involved although to a lesser extent. The soluble form of PCSK7 is incapable of processing ITM2C. Fails to undergo shedding by ADAM10 and intramembrane cleavage by SPPL2B.

Its subcellular location is the lysosome membrane. The protein resides in the cell membrane. Functionally, negative regulator of amyloid-beta peptide production. May inhibit the processing of APP by blocking its access to alpha- and beta-secretase. Binding to the beta-secretase-cleaved APP C-terminal fragment is negligible, suggesting that ITM2C is a poor gamma-secretase cleavage inhibitor. May play a role in TNF-induced cell death and neuronal differentiation. The chain is Integral membrane protein 2C (ITM2C) from Pongo abelii (Sumatran orangutan).